The sequence spans 390 residues: Succinate--CoA ligase [ADP-forming] subunit beta (390 aa).

An ATP-grasp domain is found at 9–244 (KEIFREYGVP…LSEEDPVEVE (236 aa)). Residues lysine 46, 53–55 (GRG), glutamate 99, alanine 102, and glutamate 107 contribute to the ATP site. The Mg(2+) site is built by asparagine 199 and aspartate 213. Substrate-binding positions include asparagine 264 and 321–323 (GIV).

Belongs to the succinate/malate CoA ligase beta subunit family. Heterotetramer of two alpha and two beta subunits. Requires Mg(2+) as cofactor.

The enzyme catalyses succinate + ATP + CoA = succinyl-CoA + ADP + phosphate. It carries out the reaction GTP + succinate + CoA = succinyl-CoA + GDP + phosphate. Its pathway is carbohydrate metabolism; tricarboxylic acid cycle; succinate from succinyl-CoA (ligase route): step 1/1. In terms of biological role, succinyl-CoA synthetase functions in the citric acid cycle (TCA), coupling the hydrolysis of succinyl-CoA to the synthesis of either ATP or GTP and thus represents the only step of substrate-level phosphorylation in the TCA. The beta subunit provides nucleotide specificity of the enzyme and binds the substrate succinate, while the binding sites for coenzyme A and phosphate are found in the alpha subunit. The chain is Succinate--CoA ligase [ADP-forming] subunit beta from Nitratiruptor sp. (strain SB155-2).